The primary structure comprises 369 residues: Anhydro-N-acetylmuramic acid kinase (369 aa).

ATP is bound at residue 12 to 19 (GTSLDGVD).

The protein belongs to the anhydro-N-acetylmuramic acid kinase family.

It catalyses the reaction 1,6-anhydro-N-acetyl-beta-muramate + ATP + H2O = N-acetyl-D-muramate 6-phosphate + ADP + H(+). The protein operates within amino-sugar metabolism; 1,6-anhydro-N-acetylmuramate degradation. It participates in cell wall biogenesis; peptidoglycan recycling. Functionally, catalyzes the specific phosphorylation of 1,6-anhydro-N-acetylmuramic acid (anhMurNAc) with the simultaneous cleavage of the 1,6-anhydro ring, generating MurNAc-6-P. Is required for the utilization of anhMurNAc either imported from the medium or derived from its own cell wall murein, and thus plays a role in cell wall recycling. This is Anhydro-N-acetylmuramic acid kinase from Escherichia coli O81 (strain ED1a).